The sequence spans 96 residues: MNLRPLQDRIIVKRVEEATMTAGGLYIPETAKEKPQQGEVVAVGNGKRGEDGKVYPIDLKVGDKVLFGKYAGSEVKLEGEDFLIMREDDILGVVEK.

The protein belongs to the GroES chaperonin family. As to quaternary structure, heptamer of 7 subunits arranged in a ring. Interacts with the chaperonin GroEL.

The protein localises to the cytoplasm. In terms of biological role, together with the chaperonin GroEL, plays an essential role in assisting protein folding. The GroEL-GroES system forms a nano-cage that allows encapsulation of the non-native substrate proteins and provides a physical environment optimized to promote and accelerate protein folding. GroES binds to the apical surface of the GroEL ring, thereby capping the opening of the GroEL channel. The chain is Co-chaperonin GroES from Citrifermentans bemidjiense (strain ATCC BAA-1014 / DSM 16622 / JCM 12645 / Bem) (Geobacter bemidjiensis).